A 147-amino-acid polypeptide reads, in one-letter code: MAIRNLRFNDDEILRKKCRVVDDINDRIKVLVEDMIETMYENNGVGLASPQVGILKRIFVVDAMDGAGSRVFINPEILEKSGEQTDEEGCLSLPGRHKPVKRANKIKIKALDVNGNEFVLDAEGFLARAIQHEYDHLEGVLFIDHEL.

Cysteine 90 and histidine 132 together coordinate Fe cation. Glutamate 133 is a catalytic residue. Histidine 136 contacts Fe cation.

It belongs to the polypeptide deformylase family. The cofactor is Fe(2+).

The enzyme catalyses N-terminal N-formyl-L-methionyl-[peptide] + H2O = N-terminal L-methionyl-[peptide] + formate. Its function is as follows. Removes the formyl group from the N-terminal Met of newly synthesized proteins. Requires at least a dipeptide for an efficient rate of reaction. N-terminal L-methionine is a prerequisite for activity but the enzyme has broad specificity at other positions. This is Peptide deformylase 1 from Clostridium perfringens (strain 13 / Type A).